We begin with the raw amino-acid sequence, 130 residues long: Histone H2A type 4 (130 aa).

Serine 2 is subject to Phosphoserine; by RPS6KA5. The residue at position 4 (arginine 4) is a Citrulline; alternate. Arginine 4 is subject to Symmetric dimethylarginine; by PRMT5; alternate. N6-(2-hydroxyisobutyryl)lysine; alternate occurs at positions 6 and 10. Residues lysine 6 and lysine 10 each carry the N6-acetyllysine; alternate modification. N6-lactoyllysine; alternate is present on lysine 10. Lysine 75, lysine 76, and lysine 96 each carry N6-(2-hydroxyisobutyryl)lysine. Lysine 96 bears the N6-glutaryllysine; alternate mark. The residue at position 105 (glutamine 105) is an N5-methylglutamine. Lysine 119 is modified (N6-(2-hydroxyisobutyryl)lysine; alternate). N6-glutaryllysine; alternate is present on residues lysine 119 and lysine 120. Lysine 119 carries the N6-crotonyllysine; alternate modification. Residue lysine 120 is modified to N6-crotonyllysine. The residue at position 121 (threonine 121) is a Phosphothreonine; by DCAF1. Position 126 is an N6-glutaryllysine; alternate (lysine 126). Residue lysine 126 is modified to N6-crotonyllysine; alternate. The [ST]-Q motif signature appears at 127–128 (SQ).

This sequence belongs to the histone H2A family. In terms of assembly, the nucleosome is a histone octamer containing two molecules each of H2A, H2B, H3 and H4 assembled in one H3-H4 heterotetramer and two H2A-H2B heterodimers. The octamer wraps approximately 147 bp of DNA. In terms of processing, deiminated on Arg-4 in granulocytes upon calcium entry. Monoubiquitination of Lys-120 (H2AK119Ub) by RING1, TRIM37 and RNF2/RING2 complex gives a specific tag for epigenetic transcriptional repression and participates in X chromosome inactivation of female mammals. It is involved in the initiation of both imprinted and random X inactivation. Ubiquitinated H2A is enriched in inactive X chromosome chromatin. Ubiquitination of H2A functions downstream of methylation of 'Lys-27' of histone H3 (H3K27me). H2AK119Ub by RNF2/RING2 can also be induced by ultraviolet and may be involved in DNA repair. Following DNA double-strand breaks (DSBs), it is ubiquitinated through 'Lys-63' linkage of ubiquitin moieties by the E2 ligase UBE2N and the E3 ligases RNF8 and RNF168, leading to the recruitment of repair proteins to sites of DNA damage. Ubiquitination at Lys-14 and Lys-16 (H2AK13Ub and H2AK15Ub, respectively) in response to DNA damage is initiated by RNF168 that mediates monoubiquitination at these 2 sites, and 'Lys-63'-linked ubiquitin are then conjugated to monoubiquitin; RNF8 is able to extend 'Lys-63'-linked ubiquitin chains in vitro. H2AK119Ub and ionizing radiation-induced 'Lys-63'-linked ubiquitination (H2AK13Ub and H2AK15Ub) are distinct events. Post-translationally, phosphorylation on Ser-2 (H2AS1ph) is enhanced during mitosis. Phosphorylation on Ser-2 by RPS6KA5/MSK1 directly represses transcription. Acetylation of H3 inhibits Ser-2 phosphorylation by RPS6KA5/MSK1. Phosphorylation at Thr-121 (H2AT120ph) by DCAF1 is present in the regulatory region of many tumor suppresor genes and down-regulates their transcription. In terms of processing, symmetric dimethylation on Arg-4 by the PRDM1/PRMT5 complex may play a crucial role in the germ-cell lineage. Glutamine methylation at Gln-105 (H2AQ104me) by FBL is specifically dedicated to polymerase I. It is present at 35S ribosomal DNA locus and impairs binding of the FACT complex. Post-translationally, crotonylation (Kcr) is specifically present in male germ cells and marks testis-specific genes in post-meiotic cells, including X-linked genes that escape sex chromosome inactivation in haploid cells. Crotonylation marks active promoters and enhancers and confers resistance to transcriptional repressors. It is also associated with post-meiotically activated genes on autosomes. In terms of processing, lactylated in macrophages by EP300/P300 by using lactoyl-CoA directly derived from endogenous or exogenous lactate, leading to stimulates gene transcription. Testis.

It localises to the nucleus. It is found in the chromosome. In terms of biological role, core component of nucleosome. Nucleosomes wrap and compact DNA into chromatin, limiting DNA accessibility to the cellular machineries which require DNA as a template. Histones thereby play a central role in transcription regulation, DNA repair, DNA replication and chromosomal stability. DNA accessibility is regulated via a complex set of post-translational modifications of histones, also called histone code, and nucleosome remodeling. This chain is Histone H2A type 4, found in Rattus norvegicus (Rat).